We begin with the raw amino-acid sequence, 448 residues long: Methylenetetrahydrofolate--tRNA-(uracil-5-)-methyltransferase TrmFO (448 aa).

Position 13-18 (13-18 (GAGLAG)) interacts with FAD.

Belongs to the MnmG family. TrmFO subfamily. FAD is required as a cofactor.

It is found in the cytoplasm. The catalysed reaction is uridine(54) in tRNA + (6R)-5,10-methylene-5,6,7,8-tetrahydrofolate + NADH + H(+) = 5-methyluridine(54) in tRNA + (6S)-5,6,7,8-tetrahydrofolate + NAD(+). It carries out the reaction uridine(54) in tRNA + (6R)-5,10-methylene-5,6,7,8-tetrahydrofolate + NADPH + H(+) = 5-methyluridine(54) in tRNA + (6S)-5,6,7,8-tetrahydrofolate + NADP(+). Functionally, catalyzes the folate-dependent formation of 5-methyl-uridine at position 54 (M-5-U54) in all tRNAs. This Streptococcus pyogenes serotype M28 (strain MGAS6180) protein is Methylenetetrahydrofolate--tRNA-(uracil-5-)-methyltransferase TrmFO.